A 1733-amino-acid polypeptide reads, in one-letter code: Desertorin synthase (1733 aa).

Residues 21–358 form an N-terminal acylcarrier protein transacylase domain (SAT) region; sequence RIRQQSRSSR…HAPTRDLTEW (338 aa). Positions 372–799 constitute a Ketosynthase family 3 (KS3) domain; sequence DCRIAVVGMS…GGNTALLLEE (428 aa). The segment covering 406–422 has biased composition (basic and acidic residues); sequence HVPPDRYDVQSHTDPTG. The tract at residues 406–429 is disordered; the sequence is HVPPDRYDVQSHTDPTGRRMNTSQ. Catalysis depends on for beta-ketoacyl synthase activity residues C544, H679, and H718. Residues 903–1211 are malonyl-CoA:ACP transacylase (MAT) domain; it reads FVFSGQGSFY…DNWHTLAGSM (309 aa). The tract at residues 1288 to 1420 is N-terminal hotdog fold; the sequence is HRIVEETFWA…GTVSVGNAAS (133 aa). The PKS/mFAS DH domain maps to 1288–1598; that stretch reads HRIVEETFWA…LRPLPRILMH (311 aa). The segment at 1299-1594 is product template (PT) domain; it reads GGRVVMESNV…AGVTLRPLPR (296 aa). Catalysis depends on H1320, which acts as the Proton acceptor; for dehydratase activity. Residues 1448-1598 are C-terminal hotdog fold; it reads ADRLTRDTVY…LRPLPRILMH (151 aa). Catalysis depends on D1506, which acts as the Proton donor; for dehydratase activity. The tract at residues 1608–1659 is disordered; sequence HNWGNSPAKPEAKPEMVPTSGSSSAAGSPSGSSAGPLSIPERLADPSETSFQ. The span at 1627-1643 shows a compositional bias: low complexity; that stretch reads SGSSSAAGSPSGSSAGP. Residues 1659–1733 form the Carrier domain; the sequence is QSKASKVSKA…TVGEVKRQML (75 aa). An O-(pantetheine 4'-phosphoryl)serine modification is found at S1696.

Requires pantetheine 4'-phosphate as cofactor.

It participates in secondary metabolite biosynthesis. Its function is as follows. Non-reducing polyketide synthase; part of the gene cluster that mediates the biosynthesis of the bicoumarin desertorin. The non-reducing polyketide synthase desS first catalyzes the formation of the pentaketidic 4,7-dihydroxy-5-methylcoumarin from acetyl coenzyme A and 4 malonyl coenzyme A molecules. Further O-methylation by desB leads to the formation of 7-demethylsiderin. Then, an oxidative phenol coupling catalyzed by the cytochrome P450 monooxygenase desC forms the 6,8'-dimer M-desertorin A via dimerization the monomeric precursor, 7-demethylsiderin. M-desertorin A is further converted to M-desertorin C. This chain is Desertorin synthase, found in Aspergillus desertorum (Emericella desertorum).